The chain runs to 335 residues: uncharacterized protein (335 aa).

3 disordered regions span residues 153–174 (LNDK…SDRI), 218–239 (HTSV…QEEV), and 254–295 (RCKV…PVTS). The span at 156 to 170 (KEDEEKLDQTTESEE) shows a compositional bias: acidic residues. 2 stretches are compositionally biased toward low complexity: residues 222–234 (RRSM…SASS) and 275–295 (THTS…PVTS).

This is an uncharacterized protein from Caenorhabditis elegans.